Consider the following 627-residue polypeptide: (+)-3-carene synthase 1, chloroplastic (627 aa).

A chloroplast-targeting transit peptide spans 1–36 (MSVISIVPLASKPCLYKSFISSTHEPKALRRPISTV). Mg(2+) is bound by residues Asp-378, Asp-382, and Asp-530. A DDXXD motif motif is present at residues 378 to 382 (DDMYD).

The protein belongs to the terpene synthase family. Tpsd subfamily. Mg(2+) is required as a cofactor. The cofactor is Mn(2+).

It localises to the plastid. Its subcellular location is the chloroplast. It carries out the reaction (2E)-geranyl diphosphate = (+)-car-3-ene + diphosphate. It participates in terpene metabolism; oleoresin biosynthesis. Functionally, terpene synthase (TPS) involved in the biosynthesis of monoterpene natural products included in conifer oleoresin secretions and volatile emissions; these compounds contribute to biotic and abiotic stress defense against herbivores (e.g. insect attack by white pine weevil P.strobi) and pathogens. Catalyzes the conversion of (2E)-geranyl diphosphate (GPP) to (+)-car-3-ene. The protein is (+)-3-carene synthase 1, chloroplastic of Picea sitchensis (Sitka spruce).